The following is a 161-amino-acid chain: Small ribosomal subunit protein uS8m (161 aa).

The protein belongs to the universal ribosomal protein uS8 family. As to quaternary structure, component of the mitochondrial small ribosomal subunit (mt-SSU). Mature N.crassa 74S mitochondrial ribosomes consist of a small (37S) and a large (54S) subunit. The 37S small subunit contains a 16S ribosomal RNA (16S mt-rRNA) and 32 different proteins. The 54S large subunit contains a 23S rRNA (23S mt-rRNA) and 42 different proteins.

It is found in the mitochondrion. In terms of biological role, component of the mitochondrial ribosome (mitoribosome), a dedicated translation machinery responsible for the synthesis of mitochondrial genome-encoded proteins, including at least some of the essential transmembrane subunits of the mitochondrial respiratory chain. The mitoribosomes are attached to the mitochondrial inner membrane and translation products are cotranslationally integrated into the membrane. The sequence is that of Small ribosomal subunit protein uS8m (mrps8) from Neurospora crassa (strain ATCC 24698 / 74-OR23-1A / CBS 708.71 / DSM 1257 / FGSC 987).